We begin with the raw amino-acid sequence, 475 residues long: Ribulose bisphosphate carboxylase large chain (475 aa).

Positions Met1–Ser2 are excised as a propeptide. At Pro3 the chain carries N-acetylproline. Position 14 is an N6,N6,N6-trimethyllysine (Lys14). 2 residues coordinate substrate: Asn123 and Thr173. The active-site Proton acceptor is Lys175. Substrate is bound at residue Lys177. Positions 201, 203, and 204 each coordinate Mg(2+). Lys201 carries the N6-carboxylysine modification. The active-site Proton acceptor is His294. 3 residues coordinate substrate: Arg295, His327, and Ser379.

The protein belongs to the RuBisCO large chain family. Type I subfamily. As to quaternary structure, heterohexadecamer of 8 large chains and 8 small chains; disulfide-linked. The disulfide link is formed within the large subunit homodimers. Mg(2+) is required as a cofactor. Post-translationally, the disulfide bond which can form in the large chain dimeric partners within the hexadecamer appears to be associated with oxidative stress and protein turnover.

The protein resides in the plastid. It localises to the chloroplast. The catalysed reaction is 2 (2R)-3-phosphoglycerate + 2 H(+) = D-ribulose 1,5-bisphosphate + CO2 + H2O. It carries out the reaction D-ribulose 1,5-bisphosphate + O2 = 2-phosphoglycolate + (2R)-3-phosphoglycerate + 2 H(+). Functionally, ruBisCO catalyzes two reactions: the carboxylation of D-ribulose 1,5-bisphosphate, the primary event in carbon dioxide fixation, as well as the oxidative fragmentation of the pentose substrate in the photorespiration process. Both reactions occur simultaneously and in competition at the same active site. This chain is Ribulose bisphosphate carboxylase large chain, found in Picea abies (Norway spruce).